The following is a 255-amino-acid chain: MEQALTGEAQSRWPRRGGSGAMAEAPGPSGESRGHSATQLPAEKTVGGPSRGCSSSVLRVSQLVLQAISTHKGLTLAALKKELRNAGYEVRRKSGRHEAPRGQAKATLLRVSGSDAAGYFRVWKVPKPRRKPGRARQEEGTRAPWRTPAAPRSSRRRRQPLRKAARKAREVWRRNARAKAKANARARRTRRARPRAKEPPCARAKEEAGATAADEGRGQAVKEDTTPRSGKDKRRSSKPREEKQEPKKPAQRTIQ.

The interval 1-54 (MEQALTGEAQSRWPRRGGSGAMAEAPGPSGESRGHSATQLPAEKTVGGPSRGCS) is disordered. The residue at position 56 (serine 56) is a Phosphoserine. The span at 124-134 (KVPKPRRKPGR) shows a compositional bias: basic residues. The disordered stretch occupies residues 124–255 (KVPKPRRKPG…PKKPAQRTIQ (132 aa)). The segment covering 142–152 (RAPWRTPAAPR) has biased composition (low complexity). Composition is skewed to basic residues over residues 153 to 166 (SSRR…KAAR) and 174 to 194 (RNAR…RARP). Composition is skewed to basic and acidic residues over residues 195–230 (RAKE…PRSG) and 238–248 (KPREEKQEPKK).

It belongs to the histone H1/H5 family. In terms of tissue distribution, testis-specific.

It localises to the nucleus. The protein localises to the chromosome. In terms of biological role, essential for normal spermatogenesis and male fertility. Required for proper cell restructuring and DNA condensation during the elongation phase of spermiogenesis. Involved in the histone-protamine transition of sperm chromatin and the subsequent production of functional sperm. Binds both double-stranded and single-stranded DNA, ATP and protamine-1. The polypeptide is Testis-specific H1 histone (Homo sapiens (Human)).